The following is a 349-amino-acid chain: Adenine deaminase (349 aa).

Residues His24, His26, and His204 each contribute to the Zn(2+) site. The Proton donor role is filled by Glu207. Residue Asp285 participates in Zn(2+) binding. Substrate is bound at residue Asp286.

The protein belongs to the metallo-dependent hydrolases superfamily. Adenosine and AMP deaminases family. Adenine deaminase type 2 subfamily. Requires Zn(2+) as cofactor.

The catalysed reaction is adenine + H2O + H(+) = hypoxanthine + NH4(+). Its function is as follows. Catalyzes the hydrolytic deamination of adenine to hypoxanthine. Plays an important role in the purine salvage pathway and in nitrogen catabolism. The protein is Adenine deaminase of Trichlorobacter lovleyi (strain ATCC BAA-1151 / DSM 17278 / SZ) (Geobacter lovleyi).